A 78-amino-acid polypeptide reads, in one-letter code: Protein SlyX homolog (78 aa).

This sequence belongs to the SlyX family.

This is Protein SlyX homolog from Xylella fastidiosa (strain 9a5c).